The following is a 49-amino-acid chain: Large ribosomal subunit protein bL33 (49 aa).

The protein belongs to the bacterial ribosomal protein bL33 family.

This Streptococcus suis (strain 98HAH33) protein is Large ribosomal subunit protein bL33.